The sequence spans 230 residues: ATP synthase subunit a (230 aa).

The next 6 helical transmembrane spans lie at 16-36, 73-93, 106-126, 142-162, 165-185, and 192-212; these read LVLF…WLSI, WVSA…LGLL, TYSI…YLAF, LIPF…IALG, LAAN…AIWT, and IASI…GVAC.

The protein belongs to the ATPase A chain family. In terms of assembly, F-type ATPases have 2 components, CF(1) - the catalytic core - and CF(0) - the membrane proton channel. CF(1) has five subunits: alpha(3), beta(3), gamma(1), delta(1), epsilon(1). CF(0) has three main subunits: a, b and c.

It localises to the mitochondrion inner membrane. Mitochondrial membrane ATP synthase (F(1)F(0) ATP synthase or Complex V) produces ATP from ADP in the presence of a proton gradient across the membrane which is generated by electron transport complexes of the respiratory chain. F-type ATPases consist of two structural domains, F(1) - containing the extramembraneous catalytic core and F(0) - containing the membrane proton channel, linked together by a central stalk and a peripheral stalk. During catalysis, ATP synthesis in the catalytic domain of F(1) is coupled via a rotary mechanism of the central stalk subunits to proton translocation. Key component of the proton channel; it may play a direct role in the translocation of protons across the membrane. The sequence is that of ATP synthase subunit a (ATP6) from Patiria pectinifera (Starfish).